The primary structure comprises 37 residues: Mu-agatoxin-Aa1e (37 aa).

4 cysteine pairs are disulfide-bonded: Cys-2/Cys-18, Cys-9/Cys-23, Cys-17/Cys-33, and Cys-25/Cys-31. Asn-37 carries the post-translational modification Asparagine amide.

Belongs to the neurotoxin 07 (Beta/delta-agtx) family. 03 (aga-4) subfamily. Aga sub-subfamily. Expressed by the venom gland.

It localises to the secreted. Functionally, insecticidal neurotoxin that induces an irreversible spastic paralysis when injected into insects. Modifies presynaptic voltage-gated sodium channels (Nav), causing them to open at the normal resting potential of the nerve. This leads to spontaneous release of neurotransmitter and repetitive action potentials in motor neurons. This chain is Mu-agatoxin-Aa1e, found in Agelenopsis aperta (North American funnel-web spider).